The chain runs to 165 residues: Probable chemoreceptor glutamine deamidase CheD (165 aa).

Belongs to the CheD family.

It carries out the reaction L-glutaminyl-[protein] + H2O = L-glutamyl-[protein] + NH4(+). Probably deamidates glutamine residues to glutamate on methyl-accepting chemotaxis receptors (MCPs), playing an important role in chemotaxis. This chain is Probable chemoreceptor glutamine deamidase CheD, found in Geobacillus kaustophilus (strain HTA426).